A 749-amino-acid chain; its full sequence is Cytosolic phospholipase A2 (749 aa).

The region spanning 1–124 (MASIDPYQHI…GEKKQVPFTF (124 aa)) is the C2 domain. The segment at 1-178 (MASIDPYQHI…LRKLLGPEKT (178 aa)) is phospholipid binding. Residues Asp-40, Thr-41, Asp-43, Asn-65, Asp-93, Ala-94, and Asn-95 each coordinate Ca(2+). Residues 138–740 (VCSSTDLRFS…NDVEARKLLH (603 aa)) enclose the PLA2c domain. The Nucleophile role is filled by Ser-229. The segment at 417-458 (MEEEIENLKPKHILGNDSSDSDDEMQEPKGTENSKAEEEYQR) is disordered. A compositionally biased stretch (basic and acidic residues) spans 442 to 457 (QEPKGTENSKAEEEYQ). The Proton acceptor role is filled by Asp-549.

The protein localises to the cytoplasm. The protein resides in the cytoplasmic vesicle. It carries out the reaction a 1,2-diacyl-sn-glycero-3-phosphocholine + H2O = a 1-acyl-sn-glycero-3-phosphocholine + a fatty acid + H(+). It catalyses the reaction a 1-acyl-sn-glycero-3-phosphocholine + H2O = sn-glycerol 3-phosphocholine + a fatty acid + H(+). Its activity is regulated as follows. Stimulated by agonists such as ATP, EGF, thrombin and bradykinin as well as by cytosolic Ca(2+). Selectively hydrolyzes arachidonyl phospholipids in the sn-2 position releasing arachidonic acid. Together with its lysophospholipid activity, it is implicated in the initiation of the inflammatory response. This chain is Cytosolic phospholipase A2 (pla2g4a), found in Xenopus tropicalis (Western clawed frog).